The primary structure comprises 274 residues: Large ribosomal subunit protein uL2 (274 aa).

Disordered regions lie at residues 37 to 60 (QHQK…GHKH) and 224 to 252 (AMNP…WGNL). The segment covering 50–60 (TTRHKGGGHKH) has biased composition (basic residues). Positions 229–246 (DHPHGGGEGRTGEGRHAV) are enriched in basic and acidic residues.

The protein belongs to the universal ribosomal protein uL2 family. In terms of assembly, part of the 50S ribosomal subunit. Forms a bridge to the 30S subunit in the 70S ribosome.

Its function is as follows. One of the primary rRNA binding proteins. Required for association of the 30S and 50S subunits to form the 70S ribosome, for tRNA binding and peptide bond formation. It has been suggested to have peptidyltransferase activity; this is somewhat controversial. Makes several contacts with the 16S rRNA in the 70S ribosome. The chain is Large ribosomal subunit protein uL2 from Paracidovorax citrulli (strain AAC00-1) (Acidovorax citrulli).